We begin with the raw amino-acid sequence, 421 residues long: Gamma-glutamyl phosphate reductase (421 aa).

The protein belongs to the gamma-glutamyl phosphate reductase family.

The protein resides in the cytoplasm. The catalysed reaction is L-glutamate 5-semialdehyde + phosphate + NADP(+) = L-glutamyl 5-phosphate + NADPH + H(+). It functions in the pathway amino-acid biosynthesis; L-proline biosynthesis; L-glutamate 5-semialdehyde from L-glutamate: step 2/2. Its function is as follows. Catalyzes the NADPH-dependent reduction of L-glutamate 5-phosphate into L-glutamate 5-semialdehyde and phosphate. The product spontaneously undergoes cyclization to form 1-pyrroline-5-carboxylate. The chain is Gamma-glutamyl phosphate reductase from Brucella suis biovar 1 (strain 1330).